A 537-amino-acid chain; its full sequence is Beta-galactoside alpha-2,6-sialyltransferase 2 (537 aa).

The Cytoplasmic portion of the chain corresponds to 1–10 (MKSWVRQGRR). The helical; Signal-anchor for type II membrane protein transmembrane segment at 11–31 (LVLVGMLAWVLLFLALLSYFL) threads the bilayer. Topologically, residues 32–537 (DARVNEPLTS…PGFSTVDCDI (506 aa)) are lumenal. 2 disordered regions span residues 83 to 117 (TRDE…PEGI) and 134 to 202 (GTEN…GDSS). Over residues 134–145 (GTENIGSQSDPV) the composition is skewed to polar residues. Residues 166–185 (EEEEEEEEEEERQENEDEDV) are compositionally biased toward acidic residues. Disulfide bonds link C265–C535, C312–C464, and C482–C493. N353 and N373 each carry an N-linked (GlcNAc...) asparagine glycan.

Belongs to the glycosyltransferase 29 family.

It localises to the golgi apparatus. Its subcellular location is the golgi stack membrane. It carries out the reaction a beta-D-galactoside + CMP-N-acetyl-beta-neuraminate = an N-acetyl-alpha-neuraminyl-(2-&gt;6)-beta-D-galactosyl derivative + CMP + H(+). Functionally, transfers sialic acid from the donor of substrate CMP-sialic acid to galactose containing acceptor substrates. The sequence is that of Beta-galactoside alpha-2,6-sialyltransferase 2 (st6gal2) from Takifugu rubripes (Japanese pufferfish).